A 307-amino-acid polypeptide reads, in one-letter code: Ribosomal RNA small subunit methyltransferase H (307 aa).

S-adenosyl-L-methionine-binding positions include 32-34, Asp52, Phe78, Asp99, and Gln106; that span reads GGH.

It belongs to the methyltransferase superfamily. RsmH family.

It localises to the cytoplasm. It catalyses the reaction cytidine(1402) in 16S rRNA + S-adenosyl-L-methionine = N(4)-methylcytidine(1402) in 16S rRNA + S-adenosyl-L-homocysteine + H(+). Specifically methylates the N4 position of cytidine in position 1402 (C1402) of 16S rRNA. The protein is Ribosomal RNA small subunit methyltransferase H of Acinetobacter baumannii (strain SDF).